The chain runs to 633 residues: MSNNIFTNNYTIVDKLSEGTYGIVYKVEHIESKKNFACKKFVIDNNFTYCNYNELIAHNEFNHSNLIEIYDILVDYGHDKCTYYVIMELCDGCLFDILFCDKVFLDESQRLDYLIQIIDGLEYMWSKGFVHNDLSLTNILVKNNKIKIADFGFMYNRFIKQDIYHRNTIYIQPPELISGHPRICDPNKIDTWALGQIFYVMCYNSVLYNYSNKTDYYLDIISKTNTPSLDIIDKLYLSDKYKKLYYNIFRKNIKKLTQNAINELVCYNKSTNKFSNDNLRKKTSSNKFIKKHMNWSVRHRPDIKQSRKLFYEILANKYPIYNSPIIQSIIPSTISFREFSFHKLWSSMNNYDYLFKSNLLFGIHFEYKIRLHHRFDYQYNLIVKIMLLMGKIIRSCFSKYNKFKCLNKFIYPNNNYLLSSQISRLENSFDRFYSMGKIIYCHYPFFENYIFDYDTIKLSNSLEFQYHFIDILDKEIPCLDAYDIFLLSNCNKMYQKYFKYMYYLFVSSPNATVFDNNIVYQSIMLIIISYKNSLIYKKLINQFLKLNISTKIKYSREINHCFNDDIINVIEIDNDYGINLNYFTVDTIITAYYIIHICRLITNEKYNLLNINFAIESKFIKYLDKLVSVIDME.

A Protein kinase domain is found at 10–314 (YTIVDKLSEG…QSRKLFYEIL (305 aa)). Residues 16–24 (LSEGTYGIV) and lysine 39 contribute to the ATP site. Aspartate 133 (proton acceptor) is an active-site residue.

Belongs to the protein kinase superfamily. Ser/Thr protein kinase family.

The catalysed reaction is L-seryl-[protein] + ATP = O-phospho-L-seryl-[protein] + ADP + H(+). It catalyses the reaction L-threonyl-[protein] + ATP = O-phospho-L-threonyl-[protein] + ADP + H(+). The chain is Putative serine/threonine-protein kinase L232 from Acanthamoeba polyphaga mimivirus (APMV).